We begin with the raw amino-acid sequence, 103 residues long: Large ribosomal subunit protein bL21 (103 aa).

It belongs to the bacterial ribosomal protein bL21 family. As to quaternary structure, part of the 50S ribosomal subunit. Contacts protein L20.

In terms of biological role, this protein binds to 23S rRNA in the presence of protein L20. The protein is Large ribosomal subunit protein bL21 of Vibrio atlanticus (strain LGP32) (Vibrio splendidus (strain Mel32)).